Here is a 259-residue protein sequence, read N- to C-terminus: Flap endonuclease Xni (259 aa).

Aspartate 109 contacts Mg(2+). In terms of domain architecture, 5'-3' exonuclease spans 165 to 255 (VKPQQLSDYW…FNLQDLRFTA (91 aa)). The K(+) site is built by leucine 176, isoleucine 187, and isoleucine 190. The interval 189-194 (GIGPKA) is interaction with DNA.

It belongs to the Xni family. It depends on Mg(2+) as a cofactor. K(+) serves as cofactor.

In terms of biological role, has flap endonuclease activity. During DNA replication, flap endonucleases cleave the 5'-overhanging flap structure that is generated by displacement synthesis when DNA polymerase encounters the 5'-end of a downstream Okazaki fragment. This is Flap endonuclease Xni from Vibrio vulnificus (strain YJ016).